Here is a 608-residue protein sequence, read N- to C-terminus: Probable adenylate kinase 5, chloroplastic (608 aa).

Low complexity predominate over residues 1 to 20 (MAASSSSSSPAAASAPFAAP). Positions 1–44 (MAASSSSSSPAAASAPFAAPGPHRRPGLALRPSPPTPPSSSLSC) are disordered. A chloroplast-targeting transit peptide spans 1-75 (MAASSSSSSP…GPRGMGLRCR (75 aa)). 99 to 104 (ASGKGT) is an ATP binding site. The segment at 119-148 (STGDLLRAEVSSGTEIGKKAKEYMDNGMLV) is NMP. Residues Thr-120, Arg-125, 146-148 (MLV), 175-178 (GYPR), and Gln-182 contribute to the AMP site. ATP is bound by residues Arg-209, Arg-213, and 222-223 (IY). The interval 212–245 (GRRLDPETGKIYHIKNFPPENDEVSARLVTRSDD) is LID. AMP-binding residues include Arg-242 and Arg-253.

It belongs to the adenylate kinase family.

It localises to the plastid. The protein resides in the chloroplast. It carries out the reaction AMP + ATP = 2 ADP. Functionally, catalyzes the reversible transfer of the terminal phosphate group between ATP and AMP. Plays an important role in cellular energy homeostasis and in adenine nucleotide metabolism. The polypeptide is Probable adenylate kinase 5, chloroplastic (Oryza sativa subsp. japonica (Rice)).